A 227-amino-acid chain; its full sequence is MKISCLICLVIVLTIIHLSQANDYCKIKCSSGVHTVCQYGESTKPSKNCAGKLIKSVGPTEEEKKLIVEEHNRFRQKVAKGLETRGNPGPQPAASNMNNLVWNDELAKIAQVWASQCQILVHDKCRNTEKYQVGQNIAYAGSSNHFPSVTKLIQLWENEVKDFNYNTGITNKNFGKVGHYTQMVWGNTKEVGCGSLKYVEKNMQIHYLICNYGPAGNYLGQPIYTKK.

An N-terminal signal peptide occupies residues 1–21 (MKISCLICLVIVLTIIHLSQA). Cystine bridges form between Cys25–Cys37, Cys29–Cys125, Cys49–Cys117, and Cys193–Cys210. The SCP domain occupies 69-212 (EEHNRFRQKV…MQIHYLICNY (144 aa)).

This sequence belongs to the CRISP family. Venom allergen 5-like subfamily. In terms of tissue distribution, expressed by the venom gland.

Its subcellular location is the secreted. The polypeptide is Venom allergen 5 (Polistes dominula (European paper wasp)).